Consider the following 402-residue polypeptide: Thyroid hormone receptor alpha (402 aa).

The interval 1–22 (MEQKPSTLDPLSEPEDTRWLDG) is disordered. Residues 1–50 (MEQKPSTLDPLSEPEDTRWLDGKRKRKSSQCLVKSSMSGYIPSYLDKDEQ) form a modulating region. Ser12 bears the Phosphoserine; by CK2 mark. At Ser28 the chain carries Phosphoserine. Zn(2+) contacts are provided by Cys51, Cys54, Cys68, Cys71, Cys89, Cys95, Cys105, and Cys108. 2 consecutive NR C4-type zinc fingers follow at residues 51-71 (CVVCGDKATGYHYRCITCEGC) and 89-113 (CKYDGCCVIDKITRNQCQLCRFKKC). Residues 51–125 (CVVCGDKATG…VGMAMDLVLD (75 aa)) constitute a DNA-binding region (nuclear receptor). Residues 161-402 (EEWELIHVVT…ELFPPLFLEV (242 aa)) form the NR LBD domain. The 3,3',5-triiodo-L-thyronine site is built by Arg226 and Ser275.

Belongs to the nuclear hormone receptor family. NR1 subfamily. As to quaternary structure, probably interacts with SFPQ.

Its subcellular location is the nucleus. In terms of biological role, nuclear hormone receptor that can act as a repressor or activator of transcription. High affinity receptor for thyroid hormones, including triiodothyronine and thyroxine. This chain is Thyroid hormone receptor alpha (THRA), found in Aptenodytes patagonicus (King penguin).